Reading from the N-terminus, the 562-residue chain is Alpha-1D adrenergic receptor (562 aa).

Over 1 to 90 (MTFRDILSVT…VGGLVVSAQG (90 aa)) the chain is Extracellular. Disordered regions lie at residues 13–44 (GPRA…GVPG) and 50–69 (AVVG…EAGA). Over residues 21-44 (GGSGAGGGAGTVGPEGPAVGGVPG) the composition is skewed to gly residues. Asparagine 60 and asparagine 76 each carry an N-linked (GlcNAc...) asparagine glycan. A helical membrane pass occupies residues 91 to 115 (VGVGVFLAAFILTAVAGNLLVILSV). The Cytoplasmic segment spans residues 116-127 (ACNRHLQTVTNY). The chain crosses the membrane as a helical span at residues 128–153 (FIVNLAVADLLLSAAVLPFSATMEVL). At 154 to 163 (GFWPFGRTFC) the chain is on the extracellular side. A helical transmembrane segment spans residues 164–186 (DVWAAVDVLCCTASILSLCTISV). Topologically, residues 187–207 (DRYVGVRHSLKYPAIMTERKA) are cytoplasmic. Residues 208-232 (AAILALLWAVALVVSVGPLLGWKEP) traverse the membrane as a helical segment. Topologically, residues 233–245 (VPPDERFCGITEE) are extracellular. Residues 246–269 (VGYAIFSSVCSFYLPMAVIVVMYC) traverse the membrane as a helical segment. Residues 270-342 (RVYVVARSTT…KFSREKKAAK (73 aa)) lie on the Cytoplasmic side of the membrane. The helical transmembrane segment at 343–367 (TLAIVVGVFVLCWFPFFFVLPLGSL) threads the bilayer. Residues 368 to 374 (FPQLKPS) lie on the Extracellular side of the membrane. The chain crosses the membrane as a helical span at residues 375-399 (EGVFKVIFWLGYFNSCVNPLIYPCS). Over 400-562 (SREFKRAFLR…DLSNLRETDI (163 aa)) the chain is Cytoplasmic. A lipid anchor (S-palmitoyl cysteine) is attached at cysteine 413. The tract at residues 444–472 (QPAHRTPRGSPSPHCTPRPGLRRHAGGAG) is disordered.

Belongs to the G-protein coupled receptor 1 family. Adrenergic receptor subfamily. ADRA1D sub-subfamily. Interacts with FLNA (via filamin repeat 21); increases PKA-mediated phosphorylation of FLNA. In terms of processing, palmitoylated. Palmitoylation by ZDHHC21 may increase the expression of the receptor and regulate downstream signaling.

Its subcellular location is the cell membrane. Functionally, this alpha-adrenergic receptor mediates its effect through the influx of extracellular calcium. The sequence is that of Alpha-1D adrenergic receptor (Adra1d) from Mus musculus (Mouse).